Reading from the N-terminus, the 338-residue chain is Lipoate-protein ligase A (338 aa).

The region spanning Pro29–Val216 is the BPL/LPL catalytic domain. Residues Arg71, Gly76–Phe79, and Lys134 contribute to the ATP site. Lys134 lines the (R)-lipoate pocket.

It belongs to the LplA family. Monomer.

The protein resides in the cytoplasm. The enzyme catalyses L-lysyl-[lipoyl-carrier protein] + (R)-lipoate + ATP = N(6)-[(R)-lipoyl]-L-lysyl-[lipoyl-carrier protein] + AMP + diphosphate + H(+). Its pathway is protein modification; protein lipoylation via exogenous pathway; protein N(6)-(lipoyl)lysine from lipoate: step 1/2. The protein operates within protein modification; protein lipoylation via exogenous pathway; protein N(6)-(lipoyl)lysine from lipoate: step 2/2. Catalyzes both the ATP-dependent activation of exogenously supplied lipoate to lipoyl-AMP and the transfer of the activated lipoyl onto the lipoyl domains of lipoate-dependent enzymes. The chain is Lipoate-protein ligase A from Salmonella choleraesuis (strain SC-B67).